We begin with the raw amino-acid sequence, 42 residues long: Cytochrome b6-f complex subunit 7 (42 aa).

A helical transmembrane segment spans residues 19-37; the sequence is AVVCFSMTLFGLSLGFGLL.

This sequence belongs to the PetM family. As to quaternary structure, the 4 large subunits of the cytochrome b6-f complex are cytochrome b6, subunit IV (17 kDa polypeptide, PetD), cytochrome f and the Rieske protein, while the 4 small subunits are PetG, PetL, PetM and PetN. The complex functions as a dimer.

The protein localises to the plastid. The protein resides in the chloroplast thylakoid membrane. Functionally, component of the cytochrome b6-f complex, which mediates electron transfer between photosystem II (PSII) and photosystem I (PSI), cyclic electron flow around PSI, and state transitions. The sequence is that of Cytochrome b6-f complex subunit 7 from Phaeodactylum tricornutum (strain CCAP 1055/1).